The sequence spans 288 residues: B3 domain-containing protein At2g35310 (288 aa).

DNA-binding regions (TF-B3) lie at residues 19–114 (FFKV…FMQD) and 196–288 (AEFS…VSKP).

The protein resides in the nucleus. In Arabidopsis thaliana (Mouse-ear cress), this protein is B3 domain-containing protein At2g35310.